The following is a 382-amino-acid chain: Caspase-1-B (382 aa).

Positions 1 to 98 (MTAQLNKVRK…HEHAPSPIQE (98 aa)) are excised as a propeptide. Residues histidine 216 and cysteine 270 contribute to the active site. Positions 283-292 (DVAPAPLEDD) are excised as a propeptide.

The protein belongs to the peptidase C14A family. In terms of assembly, heterotetramer that consists of two anti-parallel arranged heterodimers, each one formed by a 20 kDa (Caspase-1 subunit p20) and a 10 kDa (Caspase-1 subunit p10) subunit. As to quaternary structure, heterotetramer that consists of two anti-parallel arranged heterodimers, each one formed by a 20 kDa (Caspase-1 subunit p20) and a 10 kDa (Caspase-1 subunit p10) subunit. Can form a heterodimer with isoform epsilon which then has an inhibitory effect. Post-translationally, the two subunits are derived from the precursor sequence by an autocatalytic mechanism.

It is found in the cytoplasm. Its subcellular location is the cell membrane. It catalyses the reaction Strict requirement for an Asp residue at position P1 and has a preferred cleavage sequence of Tyr-Val-Ala-Asp-|-.. In terms of biological role, thiol protease involved in a variety of inflammatory processes by proteolytically cleaving other proteins, such as the precursors of the inflammatory cytokines interleukin-1 beta (IL1B) and interleukin 18 (IL18) as well as the pyroptosis inducer Gasdermin-D (GSDMD), into active mature peptides. Plays a key role in cell immunity as an inflammatory response initiator: once activated through formation of an inflammasome complex, it initiates a pro-inflammatory response through the cleavage of the two inflammatory cytokines IL1B and IL18, releasing the mature cytokines which are involved in a variety of inflammatory processes. Cleaves a tetrapeptide after an Asp residue at position P1. Also initiates pyroptosis, a programmed lytic cell death pathway, through cleavage of GSDMD. The polypeptide is Caspase-1-B (casp1-b) (Xenopus laevis (African clawed frog)).